A 665-amino-acid polypeptide reads, in one-letter code: BTB/POZ domain-containing protein At1g30440 (665 aa).

Positions 28–98 constitute a BTB domain; it reads SDIVVEVGEM…CYGVKLELTA (71 aa). The 295-residue stretch at 214-508 folds into the NPH3 domain; it reads DWWYEDASML…VQVLFFEQLQ (295 aa). The interval 260–280 is disordered; it reads LKRRRGGPESSGRFSTPLGSG. Residues 271-280 show a composition bias toward polar residues; that stretch reads GRFSTPLGSG. Ser-279 carries the phosphoserine modification. Residues 281 to 306 are a coiled coil; the sequence is NVLSEEEQKNLLEEIQELLRMQKGLV. At Tyr-449 the chain carries Phosphotyrosine. Residues 626–639 show a composition bias toward polar residues; sequence SAQEGSVSKSNNEN. A disordered region spans residues 626–665; the sequence is SAQEGSVSKSNNENVKIEKLKDVKERRGKHKKASSISSER. The span at 640–650 shows a compositional bias: basic and acidic residues; sequence VKIEKLKDVKE.

It belongs to the NPH3 family.

Its pathway is protein modification; protein ubiquitination. May act as a substrate-specific adapter of an E3 ubiquitin-protein ligase complex (CUL3-RBX1-BTB) which mediates the ubiquitination and subsequent proteasomal degradation of target proteins. The chain is BTB/POZ domain-containing protein At1g30440 from Arabidopsis thaliana (Mouse-ear cress).